A 529-amino-acid polypeptide reads, in one-letter code: Beta-hexosaminidase subunit alpha (529 aa).

Positions 1 to 22 are cleaved as a signal peptide; sequence MASSRLWFSLLLAAALAGRATA. Positions 23–88 are excised as a propeptide; that stretch reads LWPWPQNIQT…PRPYLTGKRH (66 aa). Cys58 and Cys104 are disulfide-bonded. N-linked (GlcNAc...) asparagine glycosylation is found at Asn115, Asn157, and Asn295. Cys277 and Cys328 are joined by a disulfide. The active-site Proton donor is the Glu323. The tract at residues 423 to 424 is critical for hydrolysis GM2 gangliosides; sequence NR. Cys505 and Cys522 are joined by a disulfide.

It belongs to the glycosyl hydrolase 20 family. There are 3 beta-hexosaminidase isozymes: isozyme A (hexosaminidase A) is a heterodimer composed of one subunit alpha and one subunit beta (chain A and B); isozyme B (hexosaminidase B) is a homodimer of two beta subunits (two chains A and B); isozyme S (hexosaminidase S) is a homodimer of two alpha subunits. The composition of the dimer (isozyme A versus isozyme S) has a significant effect on the substrate specificity of the alpha subunit active site.

The protein resides in the lysosome. The enzyme catalyses Hydrolysis of terminal non-reducing N-acetyl-D-hexosamine residues in N-acetyl-beta-D-hexosaminides.. It carries out the reaction N-acetyl-beta-D-galactosaminyl-(1-&gt;4)-beta-D-3-sulfogalactosyl-(1-&gt;4)-beta-D-glucosyl-(1&lt;-&gt;1')-ceramide + H2O = a beta-D-3-sulfogalactosyl-(1-&gt;4)-beta-D-glucosyl-(1&lt;-&gt;1')-ceramide + N-acetyl-beta-D-galactosamine. It catalyses the reaction a ganglioside GM2 (d18:1(4E)) + H2O = a ganglioside GM3 (d18:1(4E)) + N-acetyl-beta-D-galactosamine. The catalysed reaction is a ganglioside GM2 + H2O = a ganglioside GM3 + N-acetyl-beta-D-galactosamine. The enzyme catalyses beta-D-GalNAc-(1-&gt;4)-alpha-L-IdoA-(1-&gt;3)-beta-D-GalNAc-4-sulfate-(1-&gt;4)-alpha-L-IdoA-(1-&gt;3)-D-GalNAc-4-sulfate + H2O = alpha-L-IdoA-(1-&gt;3)-beta-D-GalNAc-4-sulfate-(1-&gt;4)-alpha-L-IdoA-(1-&gt;3)-D-GalNAc-4-sulfate + N-acetyl-D-galactosamine. It carries out the reaction N-acetyl-beta-D-6-sulfogalactosaminyl-(1-&gt;4)-alpha-L-iduronyl-(1-&gt;3)-N-acetyl-D-6-sulfogalactosamine + H2O = alpha-L-iduronyl-(1-&gt;3)-N-acetyl-D-6-sulfogalactosamine + N-acetyl-D-6-sulfogalactosamine. Its activity is regulated as follows. Addition of GM2A stimulates the hydrolysis of sulfated glycosphingolipid SM2 and the ganglioside GM2. Hydrolyzes the non-reducing end N-acetyl-D-hexosamine and/or sulfated N-acetyl-D-hexosamine of glycoconjugates, such as the oligosaccharide moieties from proteins and neutral glycolipids, or from certain mucopolysaccharides. The isozyme S is as active as the isozyme A on the anionic bis-sulfated glycans, the chondroitin-6-sulfate trisaccharide (C6S-3), and the dermatan sulfate pentasaccharide, and the sulfated glycosphingolipid SM2. The isozyme B does not hydrolyze each of these substrates, however hydrolyzes efficiently neutral oligosaccharide. Only the isozyme A is responsible for the degradation of GM2 gangliosides in the presence of GM2A. The protein is Beta-hexosaminidase subunit alpha of Pongo abelii (Sumatran orangutan).